Here is a 279-residue protein sequence, read N- to C-terminus: Type II iodothyronine deiodinase (279 aa).

Topologically, residues 1 to 7 are lumenal; it reads MGLLSAD. A helical; Signal-anchor for type III membrane protein transmembrane segment spans residues 8–28; it reads LLITLQILPVFFSNCLFLALY. Over 29 to 279 the chain is Cytoplasmic; sequence DSVILLKHMV…TEDLSTDVSL (251 aa). Residue U132 is part of the active site. Non-standard amino acids (selenocysteine) are located at U132 and U265.

The protein belongs to the iodothyronine deiodinase family. In terms of assembly, predominantly monomer. Can form homodimers but homodimerization is not essential for enzyme activity. In terms of tissue distribution, highly expressed in liver and in various parts of the brain including telencephalon, hippocampus, cerebellum, and brain stem, and weakly expressed in thyroid, lung, and small intestine. Not detected in skeletal muscle, heart atria or ventricle, gizzard or kidney.

Its subcellular location is the endoplasmic reticulum membrane. It carries out the reaction 3,3',5-triiodo-L-thyronine + iodide + A + H(+) = L-thyroxine + AH2. It catalyses the reaction 3,3'-diiodo-L-thyronine + iodide + A + H(+) = 3,3',5'-triiodo-L-thyronine + AH2. The catalysed reaction is 3'-iodo-L-thyronine + iodide + A + H(+) = 3',5'-diiodo-L-thyronine + AH2. The enzyme catalyses 3,3'-diiodothyronamine + iodide + A + H(+) = 3,3',5'-triiodothyronamine + AH2. It carries out the reaction 3'-iodothyronamine + iodide + A + H(+) = 3',5'-diiodothyronamine + AH2. With respect to regulation, not inhibited by N(6)-propylthiouracil. Functionally, plays a crucial role in the metabolism of thyroid hormones (TH) and has specific roles in TH activation and inactivation by deiodination. Catalyzes the deiodination of L-thyroxine (T4) to 3,5,3'-triiodothyronine (T3) and 3,3',5'-triiodothyronine (rT3) to 3,3'-diiodothyronine (3,3'-T2) via outer-ring deiodination (ORD). Catalyzes the deiodination of 3',5'-diiodothyronine (3',5'-T2) to 3'-monoiodothyronine (3'-T1) via ORD. Catalyzes the phenolic ring deiodinations of 3,3',5'-triiodothyronamine and 3',5'- diiodothyronamine. The protein is Type II iodothyronine deiodinase (DIO2) of Gallus gallus (Chicken).